The primary structure comprises 996 residues: Poly [ADP-ribose] polymerase (996 aa).

Residues 1-369 (MEIDLPFKVE…TSTILKNISL (369 aa)) mediate DNA binding. PARP-type zinc fingers lie at residues 7-89 (FKVE…DNCT) and 114-203 (FGIE…PVIK). Zn(2+) contacts are provided by Cys19, Cys22, His51, Cys54, Cys126, Cys129, His161, and Cys164. 2 consecutive short sequence motifs (nuclear localization signal) follow at residues 211–214 (KKAK) and 232–235 (KIKK). Positions 220–358 (EEDAASIKEL…EVRAIRYIPP (139 aa)) constitute a PADR1 zinc-binding domain. Residues 286 to 329 (GALLPCTDCKGRQLLFHKSGYLCNGDLTEWTKCTKLLKEPERKS) form a zinc ribbon region. 4 residues coordinate Zn(2+): Cys291, Cys294, Cys308, and Cys318. Residues 370–507 (KKGDELDGPK…SIYTKSVPKS (138 aa)) are automodification domain. Residues 382-473 (RERPPLYNIE…AGAINYISSM (92 aa)) enclose the BRCT domain. The 99-residue stretch at 527–625 (VAHVYVSRNK…ENFVKVAGRM (99 aa)) folds into the WGR domain. The region spanning 647–764 (KSKLPLSVQD…EIECAYSLLQ (118 aa)) is the PARP alpha-helical domain. The PARP catalytic domain occupies 773 to 996 (NPIDKHYEQL…YMLRMNFKYK (224 aa)).

Belongs to the ARTD/PARP family.

The protein localises to the nucleus. The enzyme catalyses NAD(+) + (ADP-D-ribosyl)n-acceptor = nicotinamide + (ADP-D-ribosyl)n+1-acceptor + H(+).. It carries out the reaction L-aspartyl-[protein] + NAD(+) = 4-O-(ADP-D-ribosyl)-L-aspartyl-[protein] + nicotinamide. It catalyses the reaction L-glutamyl-[protein] + NAD(+) = 5-O-(ADP-D-ribosyl)-L-glutamyl-[protein] + nicotinamide. Its function is as follows. Poly-ADP-ribosyltransferase that mediates poly-ADP-ribosylation of proteins and plays a key role in DNA repair. Mainly mediates glutamate and aspartate ADP-ribosylation of target proteins: the ADP-D-ribosyl group of NAD(+) is transferred to the acceptor carboxyl group of glutamate and aspartate residues and further ADP-ribosyl groups are transferred to the 2'-position of the terminal adenosine moiety, building up a polymer with an average chain length of 20-30 units. The polypeptide is Poly [ADP-ribose] polymerase (Sarcophaga peregrina (Flesh fly)).